Reading from the N-terminus, the 623-residue chain is Myosin light chain kinase 2, skeletal/cardiac muscle (623 aa).

Disordered regions lie at residues 1–179 and 204–251; these read MATE…PSCP and GVPV…QGDT. The residue at position 2 (alanine 2) is an N-acetylalanine. Over residues 20–31 the composition is skewed to low complexity; that stretch reads APKAAAGEGPPA. Composition is skewed to basic and acidic residues over residues 32–43 and 49–89; these read AEKDPGPPDPQK and DPEK…EKGD. Over residues 90-102 the composition is skewed to low complexity; the sequence is GASAQPSASSQGP. Positions 150–159 are enriched in basic and acidic residues; it reads GEAKEQKKVA. 3 positions are modified to phosphoserine: serine 169, serine 175, and serine 177. The span at 204–214 shows a compositional bias: low complexity; that stretch reads GVPVTPGPTET. Basic and acidic residues predominate over residues 215–224; that stretch reads EPAKVAEGEK. Residues 312-567 enclose the Protein kinase domain; the sequence is LNSKEALGGG…AAQCLAHPWL (256 aa). ATP is bound by residues 318-326 and lysine 341; that span reads LGGGKFGAV. Aspartate 433 functions as the Proton acceptor in the catalytic mechanism. Threonine 472 carries the post-translational modification Phosphothreonine. A calmodulin-binding region spans residues 601–613; it reads IAVSAANRFKKIS.

Belongs to the protein kinase superfamily. CAMK Ser/Thr protein kinase family. May interact with centrin.

It localises to the cytoplasm. It catalyses the reaction L-seryl-[myosin light chain] + ATP = O-phospho-L-seryl-[myosin light chain] + ADP + H(+). The catalysed reaction is L-threonyl-[myosin light chain] + ATP = O-phospho-L-threonyl-[myosin light chain] + ADP + H(+). In terms of biological role, implicated in the level of global muscle contraction and cardiac function. Phosphorylates a specific serine in the N-terminus of a myosin light chain. This Bos taurus (Bovine) protein is Myosin light chain kinase 2, skeletal/cardiac muscle (MYLK2).